A 518-amino-acid chain; its full sequence is Ell-associated factor Eaf (518 aa).

2 stretches are compositionally biased toward polar residues: residues 119–128 (KTRSEMTNKP) and 163–182 (ENST…SRRN). 2 disordered regions span residues 119 to 216 (KTRS…PAWH) and 241 to 518 (ALHN…DDDD). A Phosphoserine modification is found at Ser192. Polar residues-rich tracts occupy residues 253–265 (ANIS…SSVG) and 274–284 (MGKQRQASSQG). A compositionally biased stretch (low complexity) spans 289 to 342 (QQQTQRSSPPMQQQQQQQNYGRGGANNNYAQQLHQQQQQQQQQQLQQQQQQMQQ). The segment covering 343–355 (RASFSHSNHSNSM) has biased composition (polar residues). Residues 368–377 (AAQSMAQAAA) show a composition bias toward low complexity. Acidic residues predominate over residues 397–412 (ESSDSDSGSDSDDSTE). Composition is skewed to low complexity over residues 418 to 428 (HQQQQPPGQLS), 463 to 476 (QQQQ…QQQQ), and 500 to 518 (NDLL…DDDD).

It belongs to the EAF family.

It is found in the nucleus. In terms of biological role, promotes transcriptional elongation by Su(Tpl)/ELL. Essential for development. The protein is Ell-associated factor Eaf of Drosophila mojavensis (Fruit fly).